A 222-amino-acid chain; its full sequence is Protein GrpE (222 aa).

The disordered stretch occupies residues 1–82 (MSDFNKDEYL…KADDTLTPLG (82 aa)). Low complexity predominate over residues 20–71 (SGQAAPAAASADSAAAAAGATQEGAAQPAAAQSQENGDSAAADGADKAGAAD).

Belongs to the GrpE family. In terms of assembly, homodimer.

It is found in the cytoplasm. Its function is as follows. Participates actively in the response to hyperosmotic and heat shock by preventing the aggregation of stress-denatured proteins, in association with DnaK and GrpE. It is the nucleotide exchange factor for DnaK and may function as a thermosensor. Unfolded proteins bind initially to DnaJ; upon interaction with the DnaJ-bound protein, DnaK hydrolyzes its bound ATP, resulting in the formation of a stable complex. GrpE releases ADP from DnaK; ATP binding to DnaK triggers the release of the substrate protein, thus completing the reaction cycle. Several rounds of ATP-dependent interactions between DnaJ, DnaK and GrpE are required for fully efficient folding. The protein is Protein GrpE of Bifidobacterium adolescentis (strain ATCC 15703 / DSM 20083 / NCTC 11814 / E194a).